The chain runs to 179 residues: Sec-independent protein translocase protein TatB (179 aa).

A helical transmembrane segment spans residues 2–22 (FNGVGWGEVVVLLLIGLFVFG). A compositionally biased stretch (low complexity) spans 98–109 (LLGDDPPAAPSL). Positions 98-179 (LLGDDPPAAP…TEVPFDSDAT (82 aa)) are disordered.

This sequence belongs to the TatB family. As to quaternary structure, the Tat system comprises two distinct complexes: a TatABC complex, containing multiple copies of TatA, TatB and TatC subunits, and a separate TatA complex, containing only TatA subunits. Substrates initially bind to the TatABC complex, which probably triggers association of the separate TatA complex to form the active translocon.

Its subcellular location is the cell membrane. In terms of biological role, part of the twin-arginine translocation (Tat) system that transports large folded proteins containing a characteristic twin-arginine motif in their signal peptide across membranes. Together with TatC, TatB is part of a receptor directly interacting with Tat signal peptides. TatB may form an oligomeric binding site that transiently accommodates folded Tat precursor proteins before their translocation. The sequence is that of Sec-independent protein translocase protein TatB from Frankia casuarinae (strain DSM 45818 / CECT 9043 / HFP020203 / CcI3).